Consider the following 687-residue polypeptide: Variant-specific surface protein VSP4A1 (687 aa).

The first 14 residues, 1 to 14 (MLLTAFYVVLGSFA), serve as a signal peptide directing secretion. At 15–660 (APCQQDGDHI…SGLSTGAIAG (646 aa)) the chain is on the extracellular side. The helical transmembrane segment at 661–681 (ISVAAIVVVGGLVGFLCWWFI) threads the bilayer. The Cytoplasmic portion of the chain corresponds to 682 to 687 (CRGKAQ).

Belongs to the Giardia variant surface protein family. In terms of processing, O-glycosylated. The major glycan is a trisaccharide with Glc at the reducing terminus. Post-translationally, palmitoylated.

It is found in the cell membrane. The protein is Variant-specific surface protein VSP4A1 of Giardia intestinalis (Giardia lamblia).